Here is a 187-residue protein sequence, read N- to C-terminus: UPF0301 protein WIGBR1650 (187 aa).

This sequence belongs to the UPF0301 (AlgH) family.

The sequence is that of UPF0301 protein WIGBR1650 from Wigglesworthia glossinidia brevipalpis.